The chain runs to 113 residues: Major basic nuclear protein 1 (113 aa).

The tract at residues 1 to 20 (MAPKMKAAMKAMKAPAMKGK) is disordered.

The protein localises to the nucleus. The polypeptide is Major basic nuclear protein 1 (HCc1) (Crypthecodinium cohnii (Dinoflagellate)).